A 394-amino-acid polypeptide reads, in one-letter code: LL-diaminopimelate aminotransferase (394 aa).

The substrate site is built by Tyr-14 and Gly-41. Pyridoxal 5'-phosphate-binding positions include Tyr-71, 104–105, Tyr-128, Asn-174, Tyr-205, and 233–235; these read AK and SFS. Lys-105, Tyr-128, and Asn-174 together coordinate substrate. Lys-236 carries the post-translational modification N6-(pyridoxal phosphate)lysine. Pyridoxal 5'-phosphate contacts are provided by Arg-244 and Asn-275. The substrate site is built by Asn-275 and Arg-369.

The protein belongs to the class-I pyridoxal-phosphate-dependent aminotransferase family. LL-diaminopimelate aminotransferase subfamily. As to quaternary structure, homodimer. It depends on pyridoxal 5'-phosphate as a cofactor.

The catalysed reaction is (2S,6S)-2,6-diaminopimelate + 2-oxoglutarate = (S)-2,3,4,5-tetrahydrodipicolinate + L-glutamate + H2O + H(+). Its pathway is amino-acid biosynthesis; L-lysine biosynthesis via DAP pathway; LL-2,6-diaminopimelate from (S)-tetrahydrodipicolinate (aminotransferase route): step 1/1. Its function is as follows. Involved in the synthesis of meso-diaminopimelate (m-DAP or DL-DAP), required for both lysine and peptidoglycan biosynthesis. Catalyzes the direct conversion of tetrahydrodipicolinate to LL-diaminopimelate. Is also able to use meso-diaminopimelate, cystathionine, lysine or ornithine as substrates. The polypeptide is LL-diaminopimelate aminotransferase (Chlamydia trachomatis serovar D (strain ATCC VR-885 / DSM 19411 / UW-3/Cx)).